Reading from the N-terminus, the 364-residue chain is MDSSRTIGLYFDSALPSSNLLAFPIVLQDIGDGKKQIAPQYRIQRLDSWTDSKEDSVFITTYGFIFQVGNEEVTVGMISDNPKHELLSAAMLCLGSVPNVGDLVELARACLTMVVTCKKSATDTERMVFSVVQAPQVLQSCRVVANKYSSVNAVKHVKAPEKIPGSGTLEYKVNFVSLTVVPRKDVYKIPTAALKVSGSSLYNLALNVTIDVEVDPKSPLVKSLSKSDSGYYANLFLHIGLMSTVDKKGKKVTFDKLERKIRRLDLSVGLSDVLGPSVLVKARGARTRLLAPFFSSSGTACYPISNASPQVAKILWSQTARLRSVKVIIQAGTQRAVAVTADHEVTSTKIEKRHTIAKYNPFKK.

The FPIV motif motif lies at 23-26 (FPIV).

The protein belongs to the morbillivirus/respirovirus/rubulavirus M protein family.

It localises to the virion. Functionally, the M protein has a crucial role in virus assembly and interacts with the RNP complex as well as with the viral membrane. This chain is Matrix protein (M), found in Gallus gallus (Chicken).